The chain runs to 572 residues: DNA polymerase (572 aa).

The tract at residues 1-222 is 3'-5' exonuclease and strand displacement activities; it reads MPRKMYSCDF…LGLDKEVRYA (222 aa). An interaction with the primer terminal protein region spans residues 56–66; that stretch reads YFHNLKFDGAF. Aspartate 142 and aspartate 166 together coordinate Mg(2+). Positions 223–226 are DNA-binding; Involved in the formation of a stable complex between TP and phi29 DNA polymerase; the sequence is YRGG. Residues 227-572 form an initiation, polymerization and pyrophosphorolytic activities region; it reads FTWLNDRFKE…VLVDDTFTIK (346 aa). The Mg(2+) site is built by aspartate 246 and valine 247. 5-methyl-UTP contacts are provided by tyrosine 251, lysine 368, and lysine 380. Residues aspartate 453 and aspartate 455 each coordinate Mg(2+). Aspartate 455 is a binding site for 5-methyl-UTP.

Belongs to the DNA polymerase type-B family. In terms of assembly, interacts with the primer terminal protein; this interaction allows the initiation of TP-primed DNA replication at both viral DNA ends. Interacts with DNA. The cofactor is Mg(2+).

The enzyme catalyses DNA(n) + a 2'-deoxyribonucleoside 5'-triphosphate = DNA(n+1) + diphosphate. Polymerase responsible for protein-primed viral DNA replication by strand displacement with high processivity and fidelity. To start replication, the DNA polymerase forms a heterodimer with a free primer terminal protein (TP), recognizes the replication origins at both 5' ends of the linear chromosome, and initiates replication using as primer the OH-group of Ser-232 of the TP. This polymerase possesses three enzymatic activities: DNA synthesis (polymerase), primer terminal protein (TP) deoxynucleotidylation, which is the formation of a covalent linkage (phosphoester) between the hydroxyl group of a specific serine residue in TP and 5'-dAMP, a reaction directed by the second T at the 3' end, and 3' to 5' exonuclease activity. Exonuclease activity has a proofreading purpose. The sequence is that of DNA polymerase (2) from Bacillus subtilis (Bacteriophage PZA).